The sequence spans 494 residues: Aspartyl/glutamyl-tRNA(Asn/Gln) amidotransferase subunit B (494 aa).

This sequence belongs to the GatB/GatE family. GatB subfamily. In terms of assembly, heterotrimer of A, B and C subunits.

It catalyses the reaction L-glutamyl-tRNA(Gln) + L-glutamine + ATP + H2O = L-glutaminyl-tRNA(Gln) + L-glutamate + ADP + phosphate + H(+). The enzyme catalyses L-aspartyl-tRNA(Asn) + L-glutamine + ATP + H2O = L-asparaginyl-tRNA(Asn) + L-glutamate + ADP + phosphate + 2 H(+). In terms of biological role, allows the formation of correctly charged Asn-tRNA(Asn) or Gln-tRNA(Gln) through the transamidation of misacylated Asp-tRNA(Asn) or Glu-tRNA(Gln) in organisms which lack either or both of asparaginyl-tRNA or glutaminyl-tRNA synthetases. The reaction takes place in the presence of glutamine and ATP through an activated phospho-Asp-tRNA(Asn) or phospho-Glu-tRNA(Gln). This Rhizorhabdus wittichii (strain DSM 6014 / CCUG 31198 / JCM 15750 / NBRC 105917 / EY 4224 / RW1) (Sphingomonas wittichii) protein is Aspartyl/glutamyl-tRNA(Asn/Gln) amidotransferase subunit B.